Here is a 260-residue protein sequence, read N- to C-terminus: Ubiquinone/menaquinone biosynthesis C-methyltransferase UbiE (260 aa).

Residues threonine 83, aspartate 104, and 132-133 (NA) each bind S-adenosyl-L-methionine.

This sequence belongs to the class I-like SAM-binding methyltransferase superfamily. MenG/UbiE family.

It catalyses the reaction a 2-demethylmenaquinol + S-adenosyl-L-methionine = a menaquinol + S-adenosyl-L-homocysteine + H(+). The enzyme catalyses a 2-methoxy-6-(all-trans-polyprenyl)benzene-1,4-diol + S-adenosyl-L-methionine = a 5-methoxy-2-methyl-3-(all-trans-polyprenyl)benzene-1,4-diol + S-adenosyl-L-homocysteine + H(+). It participates in quinol/quinone metabolism; menaquinone biosynthesis; menaquinol from 1,4-dihydroxy-2-naphthoate: step 2/2. The protein operates within cofactor biosynthesis; ubiquinone biosynthesis. Methyltransferase required for the conversion of demethylmenaquinol (DMKH2) to menaquinol (MKH2) and the conversion of 2-polyprenyl-6-methoxy-1,4-benzoquinol (DDMQH2) to 2-polyprenyl-3-methyl-6-methoxy-1,4-benzoquinol (DMQH2). The chain is Ubiquinone/menaquinone biosynthesis C-methyltransferase UbiE from Bartonella quintana (strain Toulouse) (Rochalimaea quintana).